Here is a 620-residue protein sequence, read N- to C-terminus: Proline--tRNA ligase (620 aa).

It belongs to the class-II aminoacyl-tRNA synthetase family. ProS type 1 subfamily. As to quaternary structure, homodimer.

Its subcellular location is the cytoplasm. It carries out the reaction tRNA(Pro) + L-proline + ATP = L-prolyl-tRNA(Pro) + AMP + diphosphate. Catalyzes the attachment of proline to tRNA(Pro) in a two-step reaction: proline is first activated by ATP to form Pro-AMP and then transferred to the acceptor end of tRNA(Pro). As ProRS can inadvertently accommodate and process non-cognate amino acids such as alanine and cysteine, to avoid such errors it has two additional distinct editing activities against alanine. One activity is designated as 'pretransfer' editing and involves the tRNA(Pro)-independent hydrolysis of activated Ala-AMP. The other activity is designated 'posttransfer' editing and involves deacylation of mischarged Ala-tRNA(Pro). The misacylated Cys-tRNA(Pro) is not edited by ProRS. The polypeptide is Proline--tRNA ligase (Streptococcus thermophilus (strain CNRZ 1066)).